The chain runs to 34 residues: GIFLNALKNFAKTAGKGVLQSVLNTASCKLSKQC.

C28 and C34 form a disulfide bridge.

As to expression, expressed by the skin glands.

Its subcellular location is the secreted. Its function is as follows. Antimicrobial peptide. The polypeptide is Brevinin-2Rf (Pelophylax ridibundus (Marsh frog)).